A 359-amino-acid chain; its full sequence is UDP-N-acetylglucosamine--N-acetylmuramyl-(pentapeptide) pyrophosphoryl-undecaprenol N-acetylglucosamine transferase (359 aa).

Residues 12–14, Asn-124, Arg-163, Ser-191, Ile-245, 264–269, and Gln-290 contribute to the UDP-N-acetyl-alpha-D-glucosamine site; these read TGG and ALTVAE.

This sequence belongs to the glycosyltransferase 28 family. MurG subfamily.

It localises to the cell inner membrane. The enzyme catalyses di-trans,octa-cis-undecaprenyl diphospho-N-acetyl-alpha-D-muramoyl-L-alanyl-D-glutamyl-meso-2,6-diaminopimeloyl-D-alanyl-D-alanine + UDP-N-acetyl-alpha-D-glucosamine = di-trans,octa-cis-undecaprenyl diphospho-[N-acetyl-alpha-D-glucosaminyl-(1-&gt;4)]-N-acetyl-alpha-D-muramoyl-L-alanyl-D-glutamyl-meso-2,6-diaminopimeloyl-D-alanyl-D-alanine + UDP + H(+). It participates in cell wall biogenesis; peptidoglycan biosynthesis. Functionally, cell wall formation. Catalyzes the transfer of a GlcNAc subunit on undecaprenyl-pyrophosphoryl-MurNAc-pentapeptide (lipid intermediate I) to form undecaprenyl-pyrophosphoryl-MurNAc-(pentapeptide)GlcNAc (lipid intermediate II). This Nitrosococcus oceani (strain ATCC 19707 / BCRC 17464 / JCM 30415 / NCIMB 11848 / C-107) protein is UDP-N-acetylglucosamine--N-acetylmuramyl-(pentapeptide) pyrophosphoryl-undecaprenol N-acetylglucosamine transferase.